We begin with the raw amino-acid sequence, 132 residues long: Small ribosomal subunit protein uS8 (132 aa).

Belongs to the universal ribosomal protein uS8 family. In terms of assembly, part of the 30S ribosomal subunit. Contacts proteins S5 and S12.

Functionally, one of the primary rRNA binding proteins, it binds directly to 16S rRNA central domain where it helps coordinate assembly of the platform of the 30S subunit. The protein is Small ribosomal subunit protein uS8 of Staphylococcus aureus (strain USA300).